The sequence spans 84 residues: Cell division topological specificity factor (84 aa).

The protein belongs to the MinE family.

In terms of biological role, prevents the cell division inhibition by proteins MinC and MinD at internal division sites while permitting inhibition at polar sites. This ensures cell division at the proper site by restricting the formation of a division septum at the midpoint of the long axis of the cell. The chain is Cell division topological specificity factor from Paraburkholderia phytofirmans (strain DSM 17436 / LMG 22146 / PsJN) (Burkholderia phytofirmans).